The sequence spans 506 residues: Kynurenine 3-monooxygenase (506 aa).

The interval 153–174 (QETSLLPGEESEKDKKQNTEDE) is disordered. The segment covering 162-171 (ESEKDKKQNT) has biased composition (basic and acidic residues).

The protein belongs to the aromatic-ring hydroxylase family. KMO subfamily. FAD serves as cofactor.

It localises to the mitochondrion outer membrane. It carries out the reaction L-kynurenine + NADPH + O2 + H(+) = 3-hydroxy-L-kynurenine + NADP(+) + H2O. Its pathway is cofactor biosynthesis; NAD(+) biosynthesis; quinolinate from L-kynurenine: step 1/3. Functionally, catalyzes the hydroxylation of L-kynurenine (L-Kyn) to form 3-hydroxy-L-kynurenine (L-3OHKyn). Required for synthesis of quinolinic acid. The protein is Kynurenine 3-monooxygenase of Cryptococcus neoformans var. neoformans serotype D (strain JEC21 / ATCC MYA-565) (Filobasidiella neoformans).